Consider the following 657-residue polypeptide: MAPNLQPQPQSQLQRPRLKDHRPWSGLSNISKRSFRSCATSAFEADDERSSSDGDMSPRNSEADLRRPVVPRHFGHDARPTSRRELLGWYAYAFAAETYVICGIASFIPILLETLARENGVLVSDRKTPCGSSDSKNDGDGQCIVWVFGMEINTASFAMYTFSVSVLVQALLVVSISCAADHGNYRKKLLLTFAWIGSFAVMSYIFITKDNYILGALLTVISNTSFGASFVLLNSFLPLLVRYHPDVIEANVATTPDLGSSEFESRPLDQSVGQLESSPVTATSPLLHPEDGGRLKPTASHAEITSKELELSTRISAIGIGTGYIAALFLQCICIGVLISLHNTTWGQRVVLFMVGVWWTVFTIPAAMWLRPRPGPPLADNGRKGIMAGLAYILYAWKSLFKTIQQARRLLDIVLFLAGWFLLSDAIATTSSTAILFAKTQLHMKPWALGMINVISTTAGVFGAFGWSWVSRLFNLKAHQTILVCIALFELIPLYGLLGYLPFVKNWGVFGLQQPWEMYPLAAVYGVVLGGLSGYCRSLYGELIPPGSEAAFYALYAITDKGSSVFGPTIVGAIIDRTGTIRPAFWFLAVLVGFPAPLIWFIDVERGRREGAKLAKSITDSIVQEEDESDDGAERRGMLSDYEREHGQSIDDERAGR.

A compositionally biased stretch (low complexity) spans 1–15 (MAPNLQPQPQSQLQR). The interval 1-78 (MAPNLQPQPQ…VVPRHFGHDA (78 aa)) is disordered. At 1-91 (MAPNLQPQPQ…SRRELLGWYA (91 aa)) the chain is on the cytoplasmic side. Polar residues predominate over residues 26-40 (GLSNISKRSFRSCAT). The helical transmembrane segment at 92–112 (YAFAAETYVICGIASFIPILL) threads the bilayer. The Vacuolar segment spans residues 113–155 (ETLARENGVLVSDRKTPCGSSDSKNDGDGQCIVWVFGMEINTA). A helical transmembrane segment spans residues 156-176 (SFAMYTFSVSVLVQALLVVSI). Residues 177-187 (SCAADHGNYRK) are Cytoplasmic-facing. A helical membrane pass occupies residues 188-208 (KLLLTFAWIGSFAVMSYIFIT). Residues 209-212 (KDNY) lie on the Vacuolar side of the membrane. A helical transmembrane segment spans residues 213-233 (ILGALLTVISNTSFGASFVLL). The Cytoplasmic segment spans residues 234-317 (NSFLPLLVRY…ELELSTRISA (84 aa)). A helical membrane pass occupies residues 318–338 (IGIGTGYIAALFLQCICIGVL). Topologically, residues 339–349 (ISLHNTTWGQR) are vacuolar. Residue N343 is glycosylated (N-linked (GlcNAc...) asparagine). Residues 350–370 (VVLFMVGVWWTVFTIPAAMWL) traverse the membrane as a helical segment. Residues 371 to 384 (RPRPGPPLADNGRK) are Cytoplasmic-facing. The helical transmembrane segment at 385 to 405 (GIMAGLAYILYAWKSLFKTIQ) threads the bilayer. At 406–409 (QARR) the chain is on the vacuolar side. Residues 410–430 (LLDIVLFLAGWFLLSDAIATT) form a helical membrane-spanning segment. Topologically, residues 431 to 446 (SSTAILFAKTQLHMKP) are cytoplasmic. Residues 447 to 467 (WALGMINVISTTAGVFGAFGW) form a helical membrane-spanning segment. Topologically, residues 468 to 481 (SWVSRLFNLKAHQT) are vacuolar. Residues 482-502 (ILVCIALFELIPLYGLLGYLP) traverse the membrane as a helical segment. Over 503 to 515 (FVKNWGVFGLQQP) the chain is Cytoplasmic. Residues 516–536 (WEMYPLAAVYGVVLGGLSGYC) traverse the membrane as a helical segment. The Vacuolar portion of the chain corresponds to 537-554 (RSLYGELIPPGSEAAFYA). Residues 555 to 575 (LYAITDKGSSVFGPTIVGAII) form a helical membrane-spanning segment. Residues 576-583 (DRTGTIRP) lie on the Cytoplasmic side of the membrane. A helical membrane pass occupies residues 584-604 (AFWFLAVLVGFPAPLIWFIDV). The Vacuolar segment spans residues 605-657 (ERGRREGAKLAKSITDSIVQEEDESDDGAERRGMLSDYEREHGQSIDDERAGR). Residues 615-657 (AKSITDSIVQEEDESDDGAERRGMLSDYEREHGQSIDDERAGR) are disordered. The segment covering 632 to 657 (GAERRGMLSDYEREHGQSIDDERAGR) has biased composition (basic and acidic residues).

The protein belongs to the ATG22 family.

The protein resides in the vacuole membrane. Vacuolar effluxer which mediate the efflux of leucine and other amino acids resulting from autophagic degradation. The release of autophagic amino acids allows the maintenance of protein synthesis and viability during nitrogen starvation. Autophagy is required for proper vegetative growth, asexual/sexual reproduction, and full virulence. Autophagy is particularly involved in the biosynthesis of deoxynivalenol (DON), an important virulence determinant. In Gibberella zeae (strain ATCC MYA-4620 / CBS 123657 / FGSC 9075 / NRRL 31084 / PH-1) (Wheat head blight fungus), this protein is Autophagy-related protein 22.